A 211-amino-acid polypeptide reads, in one-letter code: MAPSRNGMILKPHFHKDWQRRVATWFNQPARKIRRRKARQAKARRIAPRPASGPLRPVVRCPTVRYHTKVRAGRGFSLEELRVAGIHKKVARTIGISVDPRRRNKCTESLQANVQRLKEYRSKLILFPRKPSAPKKGDSSAEELKLATQLTGPVMPIRNVYKKEKARVITEEEKNFKAFASLRMARANARLFGIRAKRAKEAAEQDVEKKK.

Lys-16 bears the N6-acetyllysine mark. Phosphoserine occurs at positions 52 and 77. Glycyl lysine isopeptide (Lys-Gly) (interchain with G-Cter in SUMO2) cross-links involve residues Lys-123 and Lys-145. Lys-174 is covalently cross-linked (Glycyl lysine isopeptide (Lys-Gly) (interchain with G-Cter in SUMO1); alternate). Residues Lys-174 and Lys-177 each participate in a glycyl lysine isopeptide (Lys-Gly) (interchain with G-Cter in SUMO2); alternate cross-link. Lys-177 is modified (N6-acetyllysine; alternate).

Belongs to the eukaryotic ribosomal protein eL13 family. In terms of assembly, component of the 60S large ribosomal subunit (LSU).

It localises to the cytoplasm. Component of the ribosome, a large ribonucleoprotein complex responsible for the synthesis of proteins in the cell. The small ribosomal subunit (SSU) binds messenger RNAs (mRNAs) and translates the encoded message by selecting cognate aminoacyl-transfer RNA (tRNA) molecules. The large subunit (LSU) contains the ribosomal catalytic site termed the peptidyl transferase center (PTC), which catalyzes the formation of peptide bonds, thereby polymerizing the amino acids delivered by tRNAs into a polypeptide chain. The nascent polypeptides leave the ribosome through a tunnel in the LSU and interact with protein factors that function in enzymatic processing, targeting, and the membrane insertion of nascent chains at the exit of the ribosomal tunnel. As part of the LSU, it is probably required for its formation and the maturation of rRNAs. Plays a role in bone development. This chain is Large ribosomal subunit protein eL13 (RPL13), found in Bos taurus (Bovine).